A 31-amino-acid chain; its full sequence is Cytochrome b6-f complex subunit 6 (31 aa).

A helical transmembrane segment spans residues 4 to 24; the sequence is VISYFGFLLVALAFTLVTYLG.

Belongs to the PetL family. As to quaternary structure, the 4 large subunits of the cytochrome b6-f complex are cytochrome b6, subunit IV (17 kDa polypeptide, PetD), cytochrome f and the Rieske protein, while the 4 small subunits are PetG, PetL, PetM and PetN. The complex functions as a dimer.

The protein localises to the plastid. It localises to the chloroplast thylakoid membrane. In terms of biological role, component of the cytochrome b6-f complex, which mediates electron transfer between photosystem II (PSII) and photosystem I (PSI), cyclic electron flow around PSI, and state transitions. PetL is important for photoautotrophic growth as well as for electron transfer efficiency and stability of the cytochrome b6-f complex. The sequence is that of Cytochrome b6-f complex subunit 6 from Nephroselmis olivacea (Green alga).